The sequence spans 248 residues: Molybdate/tungstate transport system permease protein WtpB (248 aa).

Over 1-9 (MGGRDYTLY) the chain is Cytoplasmic. A helical transmembrane segment spans residues 10–30 (LFAALGSFLIVYIALPIIVIF). At 31–56 (TKQALDFRMLVKTIHDPLVIEALRNS) the chain is on the extracellular side. The ABC transmembrane type-1 domain maps to 53 to 239 (LRNSLLTATA…GISLGIFVVL (187 aa)). A helical membrane pass occupies residues 57–77 (LLTATATALISLLFGVPLGYV). Over 78–91 (LARKDFRGKSLVQA) the chain is Cytoplasmic. A helical membrane pass occupies residues 92 to 112 (IIDVPIVIPHSVVGIMLLVTF). The Extracellular portion of the chain corresponds to 113 to 115 (SNA). The helical transmembrane segment at 116–136 (ILDSYKGIIAAMLFVSAPFAI) threads the bilayer. Over 137 to 164 (NSARDGFLAVDEKLEHVARTLGASKLRT) the chain is Cytoplasmic. The chain crosses the membrane as a helical span at residues 165–185 (FFSISLPIALPSIASGAIMAW). Over 186-223 (ARGISEVGAILIVAYYPKTAQVLVMEYFNNYGLRASRP) the chain is Extracellular. A helical transmembrane segment spans residues 224–244 (ISVILMGISLGIFVVLRWLIG). Residues 245 to 248 (KAKS) lie on the Cytoplasmic side of the membrane.

This sequence belongs to the binding-protein-dependent transport system permease family. The complex is composed of two ATP-binding proteins (WtpC), two transmembrane proteins (WtpB) and a solute-binding protein (WtpA).

Its subcellular location is the cell membrane. In terms of biological role, part of the ABC transporter complex WtpABC involved in molybdate/tungstate import. Probably responsible for the translocation of the substrate across the membrane. The polypeptide is Molybdate/tungstate transport system permease protein WtpB (wtpB) (Pyrococcus abyssi (strain GE5 / Orsay)).